Consider the following 319-residue polypeptide: Glutathione synthetase (319 aa).

The ATP-grasp domain occupies 129 to 314; the sequence is KLAILNFSRF…VAAMFADAVA (186 aa). Position 155-211 (155-211) interacts with ATP; sequence LKEHGDIIIKPLDGMGGMGIFRLTEKDPNIGSILETLMQLDSRTIMAQRYIPEIVHG. The Mg(2+) site is built by Glu-285 and Asn-287.

This sequence belongs to the prokaryotic GSH synthase family. Requires Mg(2+) as cofactor. The cofactor is Mn(2+).

It catalyses the reaction gamma-L-glutamyl-L-cysteine + glycine + ATP = glutathione + ADP + phosphate + H(+). The protein operates within sulfur metabolism; glutathione biosynthesis; glutathione from L-cysteine and L-glutamate: step 2/2. The protein is Glutathione synthetase of Neisseria meningitidis serogroup B (strain ATCC BAA-335 / MC58).